A 444-amino-acid polypeptide reads, in one-letter code: Sprouty-related, EVH1 domain-containing protein 1 (444 aa).

The residue at position 2 (Ser-2) is an N-acetylserine. Positions 6–123 (ATSDNDNSYA…RGIRRAIEDI (118 aa)) constitute a WH1 domain. Lys-225 carries the N6-methyllysine modification. A KBD domain is found at 234–286 (SIRHVSFQDEDEIVRINPRDILIRRYADYRHPDMWKNDLERDDTDSSVPFSKQ). Residue Ser-239 is modified to Phosphoserine. The disordered stretch occupies residues 268–287 (WKNDLERDDTDSSVPFSKQD). Ser-309 carries the phosphoserine modification. The required for interaction with TESK1 stretch occupies residues 333 to 444 (SRCVYCQERF…CCGGKHKAAG (112 aa)). Residues 334–442 (RCVYCQERFN…CGCCGGKHKA (109 aa)) form the SPR domain.

Homodimer and heterodimer. Able to interact with SPRED2 to form heterodimers. Interacts (via C-terminus) with TAOK1/MARKK (via C-terminus); the interaction does not affect TAOK1 kinase activity. Interacts (via C-terminus) with TESK1 (via C-terminus); the interaction inhibits TESK1 kinase activity. Interacts with CAV1. Interacts with RAS. Interacts with palmitoyltransferase ZDHHC17/HIP14; the interaction leads to palmitoylation of SPRED1. Post-translationally, palmitoylated by ZDHHC17/HIP14. In terms of processing, ubiquitinated. Phosphorylated on tyrosine. In terms of tissue distribution, expressed in brain. Weakly expressed in lung, heart, liver, kidney, intestine, spleen, testis, thymus, colon and ovary. Also expressed in embryonic tissues such as heart, lung, liver and brain. Highly expressed in IL3-dependent hematopoietic cell lines (Ba/F3 and MC/9) and bone marrow-derived mast cells (BMMC).

It localises to the cell membrane. It is found in the membrane. The protein localises to the caveola. Its subcellular location is the nucleus. Functionally, tyrosine kinase substrate that inhibits growth-factor-mediated activation of MAP kinase. Negatively regulates hematopoiesis of bone marrow. Inhibits fibroblast growth factor (FGF)-induced retinal lens fiber differentiation, probably by inhibiting FGF-mediated phosphorylation of ERK1/2. Attenuates actin stress fiber formation via inhibition of TESK1-mediated phosphorylation of cofilin. Inhibits TGFB-induced epithelial-to-mesenchymal transition in lens epithelial cells. The polypeptide is Sprouty-related, EVH1 domain-containing protein 1 (Spred1) (Mus musculus (Mouse)).